The primary structure comprises 2066 residues: Kinesin-like protein KIN-12C (2066 aa).

Disordered regions lie at residues 1 to 41 (MSRN…SQIQ) and 59 to 116 (RAQH…RVSL). Low complexity predominate over residues 20 to 33 (SLSLFSPSRPPLNS). The segment covering 67-76 (GPEKKFEVLE) has biased composition (basic and acidic residues). Polar residues predominate over residues 99–109 (EPNSAQSTPTR). The Kinesin motor domain maps to 168–505 (NVQVLIRLRP…LKFAQRAKLI (338 aa)). Residue 249–256 (GQTGSGKT) coordinates ATP. 3 microtubules-binding regions span residues 375 to 379 (SSRSH), 406 to 412 (VDLAGSE), and 454 to 458 (HVPYR). Coiled coils occupy residues 1521–1618 (DLKT…VDEI) and 1650–1772 (KIYA…EILL). Disordered regions lie at residues 1803 to 1823 (SAAETISHKTEKSSTRSRGSS) and 2043 to 2066 (KYRKTSNNHPSTRTQGQSSGTRYR). Residues 1905 to 2051 (VQRVVEKAQQ…AKYRKTSNNH (147 aa)) are a coiled coil. Residues 2047-2066 (TSNNHPSTRTQGQSSGTRYR) are compositionally biased toward polar residues.

Belongs to the TRAFAC class myosin-kinesin ATPase superfamily. Kinesin family. KIN-12 subfamily. Interacts with TAN. Interacts with RANGAP1. As to expression, expressed in tissues enriched in dividing cells, such as root meristems, root primordia, and leaf primordia/young leaves.

Its subcellular location is the cytoplasm. It localises to the cytoskeleton. The protein resides in the phragmoplast. Its function is as follows. Involved in the spatial control of cytokinesis by a proper phragmoplast guidance. Localizes TAN to the cortical division sites (CDS) during cytokinesis via direct binding. The chain is Kinesin-like protein KIN-12C from Arabidopsis thaliana (Mouse-ear cress).